The following is a 453-amino-acid chain: Bifunctional protein GlmU (453 aa).

Positions 1-231 (MERTCLAVIL…EIEMTGCNTR (231 aa)) are pyrophosphorylase. Residues 10 to 13 (LAAG), lysine 24, glutamine 77, 82 to 83 (GT), 105 to 107 (YGD), glycine 143, glutamate 157, asparagine 172, and asparagine 229 contribute to the UDP-N-acetyl-alpha-D-glucosamine site. Aspartate 107 is a Mg(2+) binding site. Asparagine 229 contacts Mg(2+). Residues 232-252 (AELAVIERFWQERRRHQMMLS) form a linker region. The segment at 253-453 (GVTMIAPETV…AIKAAKKAKA (201 aa)) is N-acetyltransferase. UDP-N-acetyl-alpha-D-glucosamine is bound by residues arginine 318 and lysine 336. Histidine 348 (proton acceptor) is an active-site residue. Tyrosine 351 and asparagine 362 together coordinate UDP-N-acetyl-alpha-D-glucosamine. Residues alanine 365, 371–372 (NY), serine 390, serine 408, and arginine 425 each bind acetyl-CoA.

It in the N-terminal section; belongs to the N-acetylglucosamine-1-phosphate uridyltransferase family. The protein in the C-terminal section; belongs to the transferase hexapeptide repeat family. Homotrimer. The cofactor is Mg(2+).

Its subcellular location is the cytoplasm. It catalyses the reaction alpha-D-glucosamine 1-phosphate + acetyl-CoA = N-acetyl-alpha-D-glucosamine 1-phosphate + CoA + H(+). The enzyme catalyses N-acetyl-alpha-D-glucosamine 1-phosphate + UTP + H(+) = UDP-N-acetyl-alpha-D-glucosamine + diphosphate. The protein operates within nucleotide-sugar biosynthesis; UDP-N-acetyl-alpha-D-glucosamine biosynthesis; N-acetyl-alpha-D-glucosamine 1-phosphate from alpha-D-glucosamine 6-phosphate (route II): step 2/2. Its pathway is nucleotide-sugar biosynthesis; UDP-N-acetyl-alpha-D-glucosamine biosynthesis; UDP-N-acetyl-alpha-D-glucosamine from N-acetyl-alpha-D-glucosamine 1-phosphate: step 1/1. It functions in the pathway bacterial outer membrane biogenesis; LPS lipid A biosynthesis. Catalyzes the last two sequential reactions in the de novo biosynthetic pathway for UDP-N-acetylglucosamine (UDP-GlcNAc). The C-terminal domain catalyzes the transfer of acetyl group from acetyl coenzyme A to glucosamine-1-phosphate (GlcN-1-P) to produce N-acetylglucosamine-1-phosphate (GlcNAc-1-P), which is converted into UDP-GlcNAc by the transfer of uridine 5-monophosphate (from uridine 5-triphosphate), a reaction catalyzed by the N-terminal domain. This chain is Bifunctional protein GlmU, found in Rhizobium johnstonii (strain DSM 114642 / LMG 32736 / 3841) (Rhizobium leguminosarum bv. viciae).